The primary structure comprises 475 residues: Gustatory and pheromone receptor 33a (475 aa).

At 1–34 (MIQIMNWFSMVIGLIPLNRQQSETNFILDYAMMC) the chain is on the cytoplasmic side. The chain crosses the membrane as a helical span at residues 35 to 55 (IVPIFYVACYLLINLSHIIGL). Topologically, residues 56–68 (CLLDSCNSVCKLS) are extracellular. Residues 69-89 (SHLFMHLGAFLYLTITLLSLY) traverse the membrane as a helical segment. At 90-128 (RRKEFFQQFDARLNDIDAVIQKCQRVAEMDKVKVTAVKH) the chain is on the cytoplasmic side. A helical transmembrane segment spans residues 129–149 (SVAYHFTWLFLFCVFTFALYY). Over 150 to 158 (DVRSLYLTF) the chain is Extracellular. A helical membrane pass occupies residues 159 to 179 (GNLAFIPFMVSSFPYLAGSII). At 180–319 (QGEFIYHVSV…LALSVITNGE (140 aa)) the chain is on the cytoplasmic side. The disordered stretch occupies residues 243–281 (TGFGNENKFAGEMKRQEGQQKNDDDDLDTSNDEDEDDFD). Residues 251-264 (FAGEMKRQEGQQKN) show a composition bias toward basic and acidic residues. Positions 265–281 (DDDDLDTSNDEDEDDFD) are enriched in acidic residues. Residues 320-340 (FGPQCVPYMAACFVVSIFGIF) traverse the membrane as a helical segment. The Extracellular segment spans residues 341–357 (LETKVNFIVGGKSRLLD). A helical transmembrane segment spans residues 358–378 (YMTYLYVIWSFTTMMVAYIVL). The Cytoplasmic portion of the chain corresponds to 379–441 (RLCCNANNHS…FNGVGLFALD (63 aa)). The helical transmembrane segment at 442–462 (YTFIFSTVSAATSYLIVLLQF) threads the bilayer. At 463 to 475 (DMTAILRNEGLMS) the chain is on the extracellular side.

Belongs to the insect chemoreceptor superfamily. Gustatory receptor (GR) family. Gr66a subfamily. Expressed widely in gustatory receptor neurons (GRNs) that respond to aversive chemicals. In larvae, is expressed in neurons of the terminal external chemosensory organ, and the dorsal, ventral and posterior external chemosensory organs.

Its subcellular location is the cell membrane. Functionally, gustatory receptor which mediates acceptance or avoidance behavior, depending on its substrates. Required for sensing all nonvolatile repulsive chemicals, including tastants, pheromones, and especially N,N-Diethyl-meta-toluamide (DEET), the most widely used insect repellent worldwide. Also functions as a pheromone receptor for a male inhibitory pheromone leading to male-male courtship suppression. This Drosophila melanogaster (Fruit fly) protein is Gustatory and pheromone receptor 33a (Gr33a).